Consider the following 128-residue polypeptide: Type-4 ice-structuring protein LS-12 (128 aa).

Residues 1–20 (MKFSLVATIVLLALAQGSFA) form the signal peptide. The residue at position 21 (Gln-21) is a Pyrrolidone carboxylic acid.

Belongs to the apolipoprotein A1/A4/E family.

It is found in the secreted. In terms of biological role, antifreeze proteins lower the blood freezing point. This is Type-4 ice-structuring protein LS-12 from Myoxocephalus octodecemspinosus (Longhorn sculpin).